Consider the following 361-residue polypeptide: Putative pumilio homolog 22 (361 aa).

The region spanning 5 to 348 (RGYDLASQVL…NIVAIIDSET (344 aa)) is the PUM-HD domain. 2 Pumilio repeats span residues 27–63 (HITY…EFLD) and 64–103 (LIAQ…RLHE). A Pumilio 3; degenerate repeat occupies 104-131 (LMAEFDEVLSTSVTADVDKLHKLASKLM). A Pumilio 4 repeat occupies 132–167 (LDSDLFFEFVITRRGSLMIQIILGKSEEVDQVILAG). Residues 168–205 (VKQRFIDVTTNFYGYRIMIQTIKVFKKRGDLKVYDQIL) form a Pumilio 5; degenerate repeat. The stretch at 206–243 (RLIGVHALYLTKDPDMGNKTFQHAINLHHQDCTTFIAC) is one Pumilio 6; degenerate repeat. Pumilio repeat units lie at residues 244-284 (GLQS…EIVK) and 285-319 (CDED…DFFG).

The protein localises to the cytoplasm. In terms of biological role, sequence-specific RNA-binding protein that regulates translation and mRNA stability by binding the 3'-UTR of target mRNAs. The protein is Putative pumilio homolog 22 (APUM22) of Arabidopsis thaliana (Mouse-ear cress).